The primary structure comprises 466 residues: 3-isopropylmalate dehydratase large subunit (466 aa).

The [4Fe-4S] cluster site is built by C347, C407, and C410.

The protein belongs to the aconitase/IPM isomerase family. LeuC type 1 subfamily. In terms of assembly, heterodimer of LeuC and LeuD. It depends on [4Fe-4S] cluster as a cofactor.

The enzyme catalyses (2R,3S)-3-isopropylmalate = (2S)-2-isopropylmalate. It participates in amino-acid biosynthesis; L-leucine biosynthesis; L-leucine from 3-methyl-2-oxobutanoate: step 2/4. In terms of biological role, catalyzes the isomerization between 2-isopropylmalate and 3-isopropylmalate, via the formation of 2-isopropylmaleate. The protein is 3-isopropylmalate dehydratase large subunit of Cronobacter sakazakii (strain ATCC BAA-894) (Enterobacter sakazakii).